We begin with the raw amino-acid sequence, 485 residues long: Glutamyl-tRNA(Gln) amidotransferase subunit A (485 aa).

Residues lysine 79 and serine 154 each act as charge relay system in the active site. The Acyl-ester intermediate role is filled by serine 178.

This sequence belongs to the amidase family. GatA subfamily. As to quaternary structure, heterotrimer of A, B and C subunits.

It catalyses the reaction L-glutamyl-tRNA(Gln) + L-glutamine + ATP + H2O = L-glutaminyl-tRNA(Gln) + L-glutamate + ADP + phosphate + H(+). Its function is as follows. Allows the formation of correctly charged Gln-tRNA(Gln) through the transamidation of misacylated Glu-tRNA(Gln) in organisms which lack glutaminyl-tRNA synthetase. The reaction takes place in the presence of glutamine and ATP through an activated gamma-phospho-Glu-tRNA(Gln). The chain is Glutamyl-tRNA(Gln) amidotransferase subunit A from Staphylococcus haemolyticus (strain JCSC1435).